Consider the following 658-residue polypeptide: Endoglucanase 3 (658 aa).

The signal sequence occupies residues 1–23 (MQLKNFYPKMSVLGIATVMALTA). The N-palmitoyl cysteine moiety is linked to residue cysteine 24. Residue cysteine 24 is the site of S-diacylglycerol cysteine attachment. Residues 24 to 265 (CGDENTQALF…TDSLFIDNIY (242 aa)) constitute a propeptide that is removed on maturation. The tract at residues 42–83 (ENQVPVSSSDMSPTSSDAVIDPTSSSAAVVDPSTLPAEGPIT) is disordered. Residues 45–58 (VPVSSSDMSPTSSD) show a composition bias toward low complexity. The 191-residue stretch at 87-277 (GLGTLVDDFE…DSSEVEKDQP (191 aa)) folds into the CBM11 domain. Glutamate 448 functions as the Proton donor in the catalytic mechanism. Residue glutamate 597 is the Nucleophile of the active site.

Belongs to the glycosyl hydrolase 5 (cellulase A) family. Monomer. Post-translationally, may be a lipoprotein and may be glycosylated.

It is found in the membrane. The enzyme catalyses Endohydrolysis of (1-&gt;4)-beta-D-glucosidic linkages in cellulose, lichenin and cereal beta-D-glucans.. Functionally, exhibits both endoglucanase and cellobiosidase activities. In Fibrobacter succinogenes (strain ATCC 19169 / S85), this protein is Endoglucanase 3 (cel-3).